A 260-amino-acid chain; its full sequence is Mediator of RNA polymerase II transcription subunit 8 (260 aa).

Belongs to the Mediator complex subunit 8 family. Component of the Mediator complex.

The protein resides in the nucleus. Functionally, component of the Mediator complex, a coactivator involved in the regulated transcription of nearly all RNA polymerase II-dependent genes. Mediator functions as a bridge to convey information from gene-specific regulatory proteins to the basal RNA polymerase II transcription machinery. Mediator is recruited to promoters by direct interactions with regulatory proteins and serves as a scaffold for the assembly of a functional preinitiation complex with RNA polymerase II and the general transcription factors. The chain is Mediator of RNA polymerase II transcription subunit 8 (med8) from Emericella nidulans (strain FGSC A4 / ATCC 38163 / CBS 112.46 / NRRL 194 / M139) (Aspergillus nidulans).